A 150-amino-acid chain; its full sequence is MQVILLEKVANLGVLGDVVKVKDGYARNFLIPTGAARRATEKAVAEFQARRAELEKVQAEKLAAAKAQGDKLAGKTVSISQKAGVDGRLFGSVTNADIAESLKALGFDVVKAQIRLPNGPLKTVGEFPVSVALHTDAVVEITVAVVGEHV.

This sequence belongs to the bacterial ribosomal protein bL9 family.

Its function is as follows. Binds to the 23S rRNA. The chain is Large ribosomal subunit protein bL9 from Leptothrix cholodnii (strain ATCC 51168 / LMG 8142 / SP-6) (Leptothrix discophora (strain SP-6)).